We begin with the raw amino-acid sequence, 465 residues long: UDP-glycosyltransferase 89A2 (465 aa).

Residues Ser291, 342–344 (VSQ), 359–367 (HCGWNSVLE), and 381–384 (EADQ) each bind UDP-alpha-D-glucose.

The protein belongs to the UDP-glycosyltransferase family.

Glucosyltransferase that glucosylates benzoates and benzoate derivatives in vitro. The chain is UDP-glycosyltransferase 89A2 (UGT89A2) from Arabidopsis thaliana (Mouse-ear cress).